The following is a 126-amino-acid chain: UPF0102 protein TP_0913 (126 aa).

This sequence belongs to the UPF0102 family.

The chain is UPF0102 protein TP_0913 from Treponema pallidum (strain Nichols).